Consider the following 1071-residue polypeptide: DNA-directed RNA polymerase subunit beta (1071 aa).

This sequence belongs to the RNA polymerase beta chain family. As to quaternary structure, in plastids the minimal PEP RNA polymerase catalytic core is composed of four subunits: alpha, beta, beta', and beta''. When a (nuclear-encoded) sigma factor is associated with the core the holoenzyme is formed, which can initiate transcription.

The protein resides in the plastid. It is found in the chloroplast. It catalyses the reaction RNA(n) + a ribonucleoside 5'-triphosphate = RNA(n+1) + diphosphate. Its function is as follows. DNA-dependent RNA polymerase catalyzes the transcription of DNA into RNA using the four ribonucleoside triphosphates as substrates. This Drimys granadensis protein is DNA-directed RNA polymerase subunit beta.